Consider the following 74-residue polypeptide: Pelophylaxin-2 (74 aa).

The N-terminal stretch at Met1–Cys22 is a signal peptide. A propeptide spanning residues Glu23–Val42 is cleaved from the precursor. Cys68 and Cys74 are joined by a disulfide.

In terms of tissue distribution, expressed by the skin glands.

It localises to the secreted. Functionally, antimicrobial peptide. The protein is Pelophylaxin-2 of Pelophylax fukienensis (Fukien gold-striped pond frog).